Here is a 301-residue protein sequence, read N- to C-terminus: Transcription elongation factor A protein 1 (301 aa).

Met-1 carries the N-acetylmethionine modification. The TFIIS N-terminal domain occupies 3 to 80 (DEVIRIAKKM…KSWKKLLDGP (78 aa)). A Glycyl lysine isopeptide (Lys-Gly) (interchain with G-Cter in ubiquitin) cross-link involves residue Lys-55. Phosphoserine is present on residues Ser-57, Ser-81, Ser-97, and Ser-100. Basic and acidic residues predominate over residues 76–93 (LLDGPSTDKDSEEKKKDT). Residues 76-139 (LLDGPSTDKD…FPRAPSTSDS (64 aa)) form a disordered region. Residues 140-256 (VRLKCREMLA…EHQMAKTGGT (117 aa)) form the TFIIS central domain. The TFIIS-type zinc-finger motif lies at 259-299 (DLFTCGKCKKKNCTYTQVQTRSADEPMTTFVVCNECGNRWK). Residues Cys-263, Cys-266, Cys-291, and Cys-294 each contribute to the Zn(2+) site.

It belongs to the TFS-II family. In terms of assembly, interacts with EAF2. Associates with UBR5 and forms a transcription regulatory complex made of CDK9, Pol II, UBR5 and TCEA1/TFIIS. Part of TBP-based Pol II pre-initiation complex (PIC), in which Pol II core assembles with general transcription factors and other specific initiation factors including GTF2E1, GTF2E2, GTF2F1, GTF2F2, TCEA1, ERCC2, ERCC3, GTF2H2, GTF2H3, GTF2H4, GTF2H5, GTF2A1, GTF2A2, GTF2B and TBP; this large multi-subunit PIC complex mediates DNA unwinding and targets Pol II core to the transcription start site where the first phosphodiester bond forms.

Its subcellular location is the nucleus. Its function is as follows. Necessary for efficient RNA polymerase II transcription elongation past template-encoded arresting sites. The arresting sites in DNA have the property of trapping a certain fraction of elongating RNA polymerases that pass through, resulting in locked ternary complexes. Cleavage of the nascent transcript by S-II allows the resumption of elongation from the new 3'-terminus. The sequence is that of Transcription elongation factor A protein 1 (TCEA1) from Bos taurus (Bovine).